A 169-amino-acid polypeptide reads, in one-letter code: uncharacterized protein (169 aa).

3 helical membrane-spanning segments follow: residues 25–45, 57–77, and 91–111; these read ALMG…MSYF, FFWV…FGVF, and LFLI…FLMV.

It belongs to the major facilitator superfamily. Allantoate permease family.

Its subcellular location is the membrane. This is an uncharacterized protein from Saccharomyces cerevisiae (strain ATCC 204508 / S288c) (Baker's yeast).